A 185-amino-acid polypeptide reads, in one-letter code: Sarcoplasmic calcium-binding proteins II, V, VI, and VII (185 aa).

EF-hand domains are found at residues 5–41 (FQKQ…YKEV), 57–92 (SLED…TIAT), 102–137 (WCQN…FQLQ), and 138–173 (CADV…TSPA). Residues Asp-19, Asn-21, Asp-23, Ser-25, Asp-30, Asp-70, Asn-72, Asp-74, Glu-81, Asp-115, Ser-117, Asp-119, and Glu-126 each coordinate Ca(2+).

Functionally, like parvalbumins, SCPs seem to be more abundant in fast contracting muscles, but no functional relationship can be established from this distribution. In Branchiostoma lanceolatum (Common lancelet), this protein is Sarcoplasmic calcium-binding proteins II, V, VI, and VII.